Consider the following 638-residue polypeptide: Guanylate-binding protein 7 (638 aa).

Positions 1-310 are GTPase domain (Globular); it reads MASEIHMPGP…DAINSGATPC (310 aa). The 243-residue stretch at 35–277 folds into the GB1/RHD3-type G domain; that stretch reads TQPVVVVAIV…FCSYIFTHAK (243 aa). GTP contacts are provided by residues 45-52, 67-69, and 97-101; these read GLYRTGKS, LGC, and DTEGL. An interaction with the CYBA-CYBB complex region spans residues 311-638; sequence LENAMAVLAQ…LRNPGKKIIS (328 aa). The tract at residues 590-638 is C-terminal tail; required for its localization to cytoplasmic vesicle; the sequence is PSVFSQILDVAGSIFIAALPGAAKLVDLGMKILSSLCNRLRNPGKKIIS.

It belongs to the TRAFAC class dynamin-like GTPase superfamily. GB1/RHD3 GTPase family. GB1 subfamily. In terms of assembly, monomer and dimer. Interacts with CYBA, CYBA-CYBB complex and ATG4B. Interacts (via GB1/RHD3-type G domain) with NCF2 and NCF2-NCF4 complex.

Its subcellular location is the cytoplasmic vesicle membrane. It carries out the reaction GTP + H2O = GDP + phosphate + H(+). The catalysed reaction is GDP + H2O = GMP + phosphate + H(+). Interferon (IFN)-inducible GTPase that plays important roles in innate immunity against a diverse range of bacterial, viral and protozoan pathogens. Hydrolyzes GTP to GMP in two consecutive cleavage reactions and predominantly uses GTP and not GDP or GMP as the substrate. Following infection, recruited to the pathogen-containing vacuoles or vacuole-escaped bacteria and acts as a positive regulator of inflammasome assembly by promoting the release of inflammasome ligands from bacteria. Acts by promoting lysis of pathogen-containing vacuoles, releasing pathogens into the cytosol. Following pathogen release in the cytosol, promotes recruitment of proteins that mediate bacterial cytolysis: this liberates ligands that are detected by inflammasomes, such as lipopolysaccharide (LPS) that activates the non-canonical CASP4/CASP11 inflammasome or double-stranded DNA (dsDNA) that activates the AIM2 inflammasome. Also promotes IFN-gamma-mediated host defense against bacterial infections by regulating oxidative responses and bacteriolytic peptide generation. May help to assemble NADPH oxidase on phagosomal membranes by acting as a bridging protein between NADPH oxidase cytosolic subunits NCF2-NCF4 and the membrane subunits CYBA-CYBB. Participates along with GBP1 in trafficking monoubiquinated protein cargo to autolysosomes for generating ubiquitin-derived antimicrobial peptides. Facilitates influenza A virus replication by inhibiting the activation of NF-kappaB and JAK-STAT signaling pathways and the expression of type I, type III interferons and pro-inflammatory cytokines. Confers protection to several pathogens, including the bacterial pathogens Listeria monocytogenes and Mycobacterium bovis BCG as well as the protozoan pathogen Toxoplasma gondii. Required for disruption of the parasitophorous vacuole formed following T.gondii infection and subsequent killing of the parasite. This chain is Guanylate-binding protein 7 (GBP7), found in Homo sapiens (Human).